The sequence spans 104 residues: Large ribosomal subunit protein uL24 (104 aa).

It belongs to the universal ribosomal protein uL24 family. Part of the 50S ribosomal subunit.

One of two assembly initiator proteins, it binds directly to the 5'-end of the 23S rRNA, where it nucleates assembly of the 50S subunit. Its function is as follows. One of the proteins that surrounds the polypeptide exit tunnel on the outside of the subunit. In Shewanella piezotolerans (strain WP3 / JCM 13877), this protein is Large ribosomal subunit protein uL24.